Reading from the N-terminus, the 67-residue chain is Large ribosomal subunit protein uL29 (67 aa).

The protein belongs to the universal ribosomal protein uL29 family.

This chain is Large ribosomal subunit protein uL29, found in Methanothrix thermoacetophila (strain DSM 6194 / JCM 14653 / NBRC 101360 / PT) (Methanosaeta thermophila).